The primary structure comprises 197 residues: dITP/XTP pyrophosphatase (197 aa).

Thr-8 to Lys-13 contacts substrate. The active-site Proton acceptor is Asp-69. Asp-69 contacts Mg(2+). Substrate-binding positions include Ser-70, Phe-154–Asp-157, Lys-177, and His-182–Arg-183.

Belongs to the HAM1 NTPase family. As to quaternary structure, homodimer. Mg(2+) is required as a cofactor.

The enzyme catalyses XTP + H2O = XMP + diphosphate + H(+). It carries out the reaction dITP + H2O = dIMP + diphosphate + H(+). The catalysed reaction is ITP + H2O = IMP + diphosphate + H(+). Pyrophosphatase that catalyzes the hydrolysis of nucleoside triphosphates to their monophosphate derivatives, with a high preference for the non-canonical purine nucleotides XTP (xanthosine triphosphate), dITP (deoxyinosine triphosphate) and ITP. Seems to function as a house-cleaning enzyme that removes non-canonical purine nucleotides from the nucleotide pool, thus preventing their incorporation into DNA/RNA and avoiding chromosomal lesions. The chain is dITP/XTP pyrophosphatase from Photobacterium profundum (strain SS9).